The sequence spans 392 residues: Acetyl-CoA acetyltransferase (392 aa).

C85 acts as the Acyl-thioester intermediate in catalysis. 4 residues coordinate CoA: C206, S207, V209, and K332. H336 (proton acceptor) is an active-site residue.

The protein belongs to the thiolase-like superfamily. Thiolase family. As to quaternary structure, interacts with HMG-CoA synthase (HMGCS) that catalyzes the second step in the pathway and with a DUF35 protein. The acetoacetyl-CoA thiolase/HMG-CoA synthase complex channels the intermediate via a fused CoA-binding site, which allows for efficient coupling of the endergonic thiolase reaction with the exergonic HMGCS reaction.

It carries out the reaction 2 acetyl-CoA = acetoacetyl-CoA + CoA. It participates in metabolic intermediate biosynthesis; (R)-mevalonate biosynthesis; (R)-mevalonate from acetyl-CoA: step 1/3. Its function is as follows. Catalyzes the condensation of two acetyl-coA molecules into acetoacetyl-CoA. Functions in the mevalonate (MVA) pathway leading to isopentenyl diphosphate (IPP), a key precursor for the biosynthesis of isoprenoid compounds that are building blocks of archaeal membrane lipids. This chain is Acetyl-CoA acetyltransferase, found in Methanothermococcus thermolithotrophicus (Methanococcus thermolithotrophicus).